The sequence spans 232 residues: MNIAIIGAMEEEVAILREKIANRTETTVANCSFYSGTLDGANVVLLKSGIGKVNAAMSTTILLERFAPDVVINTGSAGGFAPSLNVGDIVISTEVVHHDVDVTAFGYAYGQVPGMPARYAADERLIQAAETSAAHIRDIQVAKGLIATGDSFMHDPARVDFVRTQFPDLYAVEMEAAAIAQVCHQFNVPFVVIRALSDIAGKESNVSFEQFLQKAALHSSELVQLMVNELNK.

The active-site Proton acceptor is the glutamate 12. Substrate contacts are provided by residues glycine 78, methionine 153, and 174 to 175 (ME). The active-site Proton donor is the aspartate 198.

It belongs to the PNP/UDP phosphorylase family. MtnN subfamily.

It carries out the reaction S-adenosyl-L-homocysteine + H2O = S-(5-deoxy-D-ribos-5-yl)-L-homocysteine + adenine. It catalyses the reaction S-methyl-5'-thioadenosine + H2O = 5-(methylsulfanyl)-D-ribose + adenine. The enzyme catalyses 5'-deoxyadenosine + H2O = 5-deoxy-D-ribose + adenine. It functions in the pathway amino-acid biosynthesis; L-methionine biosynthesis via salvage pathway; S-methyl-5-thio-alpha-D-ribose 1-phosphate from S-methyl-5'-thioadenosine (hydrolase route): step 1/2. Catalyzes the irreversible cleavage of the glycosidic bond in both 5'-methylthioadenosine (MTA) and S-adenosylhomocysteine (SAH/AdoHcy) to adenine and the corresponding thioribose, 5'-methylthioribose and S-ribosylhomocysteine, respectively. Also cleaves 5'-deoxyadenosine, a toxic by-product of radical S-adenosylmethionine (SAM) enzymes, into 5-deoxyribose and adenine. The polypeptide is 5'-methylthioadenosine/S-adenosylhomocysteine nucleosidase (Anoxybacillus flavithermus (strain DSM 21510 / WK1)).